The primary structure comprises 186 residues: Intraflagellar transport protein 27 homolog (186 aa).

Residues 12–19 (GDPTVGKT), 64–68 (DSAGK), and 123–126 (NKTD) each bind GTP.

This sequence belongs to the small GTPase superfamily. Rab family. As to quaternary structure, component of the IFT complex B, at least composed of IFT20, IFT22, IFT25, IFT27, IFT46, IFT52, TRAF3IP1/IFT54, IFT57, IFT74, IFT80, IFT81, and IFT88. Interacts with IFT25. Interacts with IFT70B. Interacts with RABL2/RABL2A; binding is equal in the presence of GTP or GDP. Interacts with IFT88. Interacts with ARL6; recognizes and binds with the GTP-free form of ARL6.

It is found in the cell projection. The protein resides in the cilium. Its subcellular location is the cytoplasm. It localises to the flagellum. Its function is as follows. Small GTPase-like component of the intraflagellar transport (IFT) complex B that promotes the exit of the BBSome complex from cilia via its interaction with ARL6. Not involved in entry of the BBSome complex into cilium. Prevents aggregation of GTP-free ARL6. Required for hedgehog signaling. Forms a subcomplex within the IFT complex B with IFT25. Its role in intraflagellar transport is mainly seen in tissues rich in ciliated cells such as kidney and testis. Essential for male fertility, spermiogenesis and sperm flagella formation. Plays a role in the early development of the kidney. May be involved in the regulation of ureteric bud initiation. The sequence is that of Intraflagellar transport protein 27 homolog (IFT27) from Bos taurus (Bovine).